An 82-amino-acid chain; its full sequence is Delta-actitoxin-Aeq2c (82 aa).

A signal peptide spans M1–A19. Residues D20–A26 constitute a propeptide that is removed on maturation. Intrachain disulfides connect C32–C79, C34–C69, and C62–C80.

The protein belongs to the sea anemone sodium channel inhibitory toxin family. Type I subfamily.

Its subcellular location is the secreted. It is found in the nematocyst. In terms of biological role, binds specifically to voltage-gated sodium channels (Nav), thereby delaying their inactivation during signal transduction. Causes death to crabs. This is Delta-actitoxin-Aeq2c from Actinia equina (Beadlet anemone).